The chain runs to 58 residues: Bowman-Birk type wound-induced trypsin inhibitor (58 aa).

7 disulfides stabilise this stretch: C4–C57, C5–C20, C8–C53, C10–C18, C27–C34, C31–C46, and C36–C44.

This sequence belongs to the Bowman-Birk serine protease inhibitor family.

The protein is Bowman-Birk type wound-induced trypsin inhibitor of Medicago sativa (Alfalfa).